Reading from the N-terminus, the 242-residue chain is Ribonuclease HII (242 aa).

The 214-residue stretch at 21–234 (KIIVGLDEAG…SKNLLKEIEE (214 aa)) folds into the RNase H type-2 domain. A divalent metal cation-binding residues include Asp27, Glu28, and Asp128.

The protein belongs to the RNase HII family. Mn(2+) is required as a cofactor. It depends on Mg(2+) as a cofactor.

Its subcellular location is the cytoplasm. The enzyme catalyses Endonucleolytic cleavage to 5'-phosphomonoester.. In terms of biological role, endonuclease that specifically degrades the RNA of RNA-DNA hybrids. The chain is Ribonuclease HII from Methanococcus maripaludis (strain DSM 14266 / JCM 13030 / NBRC 101832 / S2 / LL).